Consider the following 137-residue polypeptide: uncharacterized protein (137 aa).

This is an uncharacterized protein from Mycobacterium tuberculosis (strain ATCC 25618 / H37Rv).